The primary structure comprises 158 residues: NAD(P)H-quinone oxidoreductase subunit J, chloroplastic (158 aa).

It belongs to the complex I 30 kDa subunit family. As to quaternary structure, NDH is composed of at least 16 different subunits, 5 of which are encoded in the nucleus.

It is found in the plastid. It localises to the chloroplast thylakoid membrane. The enzyme catalyses a plastoquinone + NADH + (n+1) H(+)(in) = a plastoquinol + NAD(+) + n H(+)(out). The catalysed reaction is a plastoquinone + NADPH + (n+1) H(+)(in) = a plastoquinol + NADP(+) + n H(+)(out). Functionally, NDH shuttles electrons from NAD(P)H:plastoquinone, via FMN and iron-sulfur (Fe-S) centers, to quinones in the photosynthetic chain and possibly in a chloroplast respiratory chain. The immediate electron acceptor for the enzyme in this species is believed to be plastoquinone. Couples the redox reaction to proton translocation, and thus conserves the redox energy in a proton gradient. The chain is NAD(P)H-quinone oxidoreductase subunit J, chloroplastic from Olimarabidopsis pumila (Dwarf rocket).